A 294-amino-acid polypeptide reads, in one-letter code: Tyrosine recombinase XerC (294 aa).

The region spanning 1 to 85 (MSRLVEDFFA…ACRGFYTWLV (85 aa)) is the Core-binding (CB) domain. One can recognise a Tyr recombinase domain in the interval 106 to 283 (KLPRILDADE…DFQYLSKVYD (178 aa)). Catalysis depends on residues Arg-145, Lys-169, His-235, Arg-238, and His-261. The active-site O-(3'-phospho-DNA)-tyrosine intermediate is the Tyr-270.

Belongs to the 'phage' integrase family. XerC subfamily. In terms of assembly, forms a cyclic heterotetrameric complex composed of two molecules of XerC and two molecules of XerD.

It is found in the cytoplasm. In terms of biological role, site-specific tyrosine recombinase, which acts by catalyzing the cutting and rejoining of the recombining DNA molecules. The XerC-XerD complex is essential to convert dimers of the bacterial chromosome into monomers to permit their segregation at cell division. It also contributes to the segregational stability of plasmids. The chain is Tyrosine recombinase XerC from Xylella fastidiosa (strain M23).